A 296-amino-acid chain; its full sequence is ATP synthase gamma chain (296 aa).

This sequence belongs to the ATPase gamma chain family. F-type ATPases have 2 components, CF(1) - the catalytic core - and CF(0) - the membrane proton channel. CF(1) has five subunits: alpha(3), beta(3), gamma(1), delta(1), epsilon(1). CF(0) has three main subunits: a, b and c.

The protein localises to the cell inner membrane. In terms of biological role, produces ATP from ADP in the presence of a proton gradient across the membrane. The gamma chain is believed to be important in regulating ATPase activity and the flow of protons through the CF(0) complex. This is ATP synthase gamma chain from Methylorubrum extorquens (strain CM4 / NCIMB 13688) (Methylobacterium extorquens).